Consider the following 496-residue polypeptide: NADP-dependent glyceraldehyde-3-phosphate dehydrogenase (496 aa).

Ala-2 carries the post-translational modification N-acetylalanine. Phosphothreonine is present on Thr-4. Substrate is bound by residues Arg-116 and 169–170; that span reads NY. 3 residues coordinate NADP(+): Lys-192, Thr-195, and Asp-230. 245-249 contributes to the NAD(+) binding site; sequence GGDTG. Catalysis depends on Glu-264, which acts as the Proton acceptor. Position 297-299 (297-299) interacts with substrate; sequence RCT. The active-site Nucleophile is Cys-298. Glu-391 lines the NADP(+) pocket. Arg-451 contributes to the substrate binding site.

Belongs to the aldehyde dehydrogenase family.

Its subcellular location is the cytoplasm. It catalyses the reaction D-glyceraldehyde 3-phosphate + NADP(+) + H2O = (2R)-3-phosphoglycerate + NADPH + 2 H(+). Its function is as follows. Important as a means of generating NADPH for biosynthetic reactions. The protein is NADP-dependent glyceraldehyde-3-phosphate dehydrogenase (ALDH11A3) of Arabidopsis thaliana (Mouse-ear cress).